Consider the following 214-residue polypeptide: 3,4-dihydroxy-2-butanone 4-phosphate synthase (214 aa).

D-ribulose 5-phosphate is bound by residues 37-38 (RE), Asp42, 150-154 (RRGHT), and Glu174. Glu38 lines the Mg(2+) pocket. Residue His153 coordinates Mg(2+).

The protein belongs to the DHBP synthase family. In terms of assembly, homodimer. It depends on Mg(2+) as a cofactor. Requires Mn(2+) as cofactor.

The catalysed reaction is D-ribulose 5-phosphate = (2S)-2-hydroxy-3-oxobutyl phosphate + formate + H(+). Its pathway is cofactor biosynthesis; riboflavin biosynthesis; 2-hydroxy-3-oxobutyl phosphate from D-ribulose 5-phosphate: step 1/1. Its function is as follows. Catalyzes the conversion of D-ribulose 5-phosphate to formate and 3,4-dihydroxy-2-butanone 4-phosphate. This Desulfotalea psychrophila (strain LSv54 / DSM 12343) protein is 3,4-dihydroxy-2-butanone 4-phosphate synthase.